Reading from the N-terminus, the 427-residue chain is Enolase (427 aa).

Position 163 (Q163) interacts with (2R)-2-phosphoglycerate. E205 acts as the Proton donor in catalysis. The Mg(2+) site is built by D242, E285, and D312. K337, R366, S367, and K388 together coordinate (2R)-2-phosphoglycerate. Catalysis depends on K337, which acts as the Proton acceptor.

This sequence belongs to the enolase family. Requires Mg(2+) as cofactor.

It is found in the cytoplasm. The protein localises to the secreted. Its subcellular location is the cell surface. The catalysed reaction is (2R)-2-phosphoglycerate = phosphoenolpyruvate + H2O. The protein operates within carbohydrate degradation; glycolysis; pyruvate from D-glyceraldehyde 3-phosphate: step 4/5. Catalyzes the reversible conversion of 2-phosphoglycerate (2-PG) into phosphoenolpyruvate (PEP). It is essential for the degradation of carbohydrates via glycolysis. The sequence is that of Enolase from Laribacter hongkongensis (strain HLHK9).